Here is a 691-residue protein sequence, read N- to C-terminus: Threonine--tRNA ligase (691 aa).

Positions 1 to 22 are disordered; that stretch reads MSVPAQPAPGADGGDPRQPIRV. One can recognise a TGS domain in the interval 1 to 73; the sequence is MSVPAQPAPG…DADAEVTPIA (73 aa). The interval 268 to 574 is catalytic; the sequence is DHRKLGVELD…LTEHYAGAFP (307 aa). Residues Cys-373, His-424, and His-551 each coordinate Zn(2+).

This sequence belongs to the class-II aminoacyl-tRNA synthetase family. As to quaternary structure, homodimer. Requires Zn(2+) as cofactor.

The protein resides in the cytoplasm. The enzyme catalyses tRNA(Thr) + L-threonine + ATP = L-threonyl-tRNA(Thr) + AMP + diphosphate + H(+). Its function is as follows. Catalyzes the attachment of threonine to tRNA(Thr) in a two-step reaction: L-threonine is first activated by ATP to form Thr-AMP and then transferred to the acceptor end of tRNA(Thr). Also edits incorrectly charged L-seryl-tRNA(Thr). The chain is Threonine--tRNA ligase from Mycobacterium marinum (strain ATCC BAA-535 / M).